Here is a 127-residue protein sequence, read N- to C-terminus: Large ribosomal subunit protein bL17 (127 aa).

The protein belongs to the bacterial ribosomal protein bL17 family. In terms of assembly, part of the 50S ribosomal subunit. Contacts protein L32.

This is Large ribosomal subunit protein bL17 from Xanthomonas axonopodis pv. citri (strain 306).